A 376-amino-acid polypeptide reads, in one-letter code: Chaperone protein DnaJ (376 aa).

In terms of domain architecture, J spans 5-70; that stretch reads DYYEVLGVAR…NKRRAYDAHG (66 aa). The CR-type zinc-finger motif lies at 132 to 209; the sequence is GIERRIEIPT…CHGAGRVEED (78 aa). 8 residues coordinate Zn(2+): Cys145, Cys148, Cys161, Cys164, Cys183, Cys186, Cys197, and Cys200. 4 CXXCXGXG motif repeats span residues 145–152, 161–168, 183–190, and 197–204; these read CEPCHGSG, CATCHGRG, CPHCDGRG, and CKTCHGAG.

Belongs to the DnaJ family. In terms of assembly, homodimer. Zn(2+) serves as cofactor.

Its subcellular location is the cytoplasm. Participates actively in the response to hyperosmotic and heat shock by preventing the aggregation of stress-denatured proteins and by disaggregating proteins, also in an autonomous, DnaK-independent fashion. Unfolded proteins bind initially to DnaJ; upon interaction with the DnaJ-bound protein, DnaK hydrolyzes its bound ATP, resulting in the formation of a stable complex. GrpE releases ADP from DnaK; ATP binding to DnaK triggers the release of the substrate protein, thus completing the reaction cycle. Several rounds of ATP-dependent interactions between DnaJ, DnaK and GrpE are required for fully efficient folding. Also involved, together with DnaK and GrpE, in the DNA replication of plasmids through activation of initiation proteins. This is Chaperone protein DnaJ from Xanthomonas campestris pv. campestris (strain 8004).